A 147-amino-acid chain; its full sequence is Putative cystatin-9-like protein CST9LP1 (147 aa).

The N-terminal stretch at 1-28 is a signal peptide; the sequence is MWSLPPSRALSCAPLLLLFSFQFLVTYA. Cys-98 and Cys-108 are oxidised to a cystine. N-linked (GlcNAc...) asparagine glycans are attached at residues Asn-117 and Asn-139. Cys-122 and Cys-142 are joined by a disulfide.

It belongs to the cystatin family.

Its subcellular location is the secreted. The protein is Putative cystatin-9-like protein CST9LP1 (CST9LP1) of Homo sapiens (Human).